A 469-amino-acid polypeptide reads, in one-letter code: Tetratricopeptide repeat protein 38 (469 aa).

TPR repeat units follow at residues 107 to 140 (REML…HPTD), 179 to 212 (SYVK…DQTD), and 251 to 284 (CHVY…QCFA).

The protein belongs to the TTC38 family.

This is Tetratricopeptide repeat protein 38 (ttc38) from Xenopus tropicalis (Western clawed frog).